The following is a 325-amino-acid chain: Foldase protein PrsA (325 aa).

The N-terminal stretch at 1–20 (MKLMNKIIVPVTASALLLGA) is a signal peptide. Residue C21 is the site of N-palmitoyl cysteine attachment. Residue C21 is the site of S-diacylglycerol cysteine attachment. In terms of domain architecture, PpiC spans 139–245 (ENSKKASHIL…YGYHIIKADK (107 aa)). 2 disordered regions span residues 159-202 (EGLS…KKDG) and 303-325 (PDKI…NSGS).

Belongs to the PrsA family.

It is found in the cell membrane. It catalyses the reaction [protein]-peptidylproline (omega=180) = [protein]-peptidylproline (omega=0). Functionally, plays a major role in protein secretion by helping the post-translocational extracellular folding of several secreted proteins. The protein is Foldase protein PrsA of Staphylococcus epidermidis (strain ATCC 12228 / FDA PCI 1200).